We begin with the raw amino-acid sequence, 403 residues long: Sulfate adenylyltransferase (403 aa).

Belongs to the sulfate adenylyltransferase family.

The catalysed reaction is sulfate + ATP + H(+) = adenosine 5'-phosphosulfate + diphosphate. It participates in sulfur metabolism; hydrogen sulfide biosynthesis; sulfite from sulfate: step 1/3. This chain is Sulfate adenylyltransferase, found in Pelodictyon phaeoclathratiforme (strain DSM 5477 / BU-1).